The following is a 508-amino-acid chain: MGLPWYRVHTVVLNDPGRLLSVHIMHTALVSGWAGSMALYELAVFDPSDPVLDPMWRQGMFVIPFMTRLGITNSWGGWSITGGTITNPGLWSYEGVAGAHIMFSGLCFLAAIWHWVYWDLEIFCDERTGKPSLDLPKIFGIHLFLSGLACFGFGAFHVTGLYGPGIWVSDPYGLTGKVQSVSPAWGAEGFDPFVPGGIASHHIAAGTLGILAGLFHLSVRPPQRLYKGLRMGNIETVLSSSIAAVFFAAFVVAGTMWYGSATTPIELFGPTRYQWDQGYFQQEIYRRVGNGLSENLSLSEAWSKIPEKLAFYDYIGNNPAKGGLFRAGSMDNGDGIAVGWLGHPVFRDNEGRELFVRRMPTFFETFPVVLVDGDGIVRADVPFRRAESKYSVEQVGVTVEFYGGELNGVSYSDPATVKKYARRAQLGEIFELDRATLKSDGVFRSSPRGWFTFGHASFALLFFFGHIWHGARTLFRDVFAGIDPDLDAQVEFGTFQKLGDPTTRRQVV.

Transmembrane regions (helical) follow at residues 21–36 (SVHI…WAGS), 101–115 (IMFS…IWHW), 140–156 (GIHL…FGAF), 203–218 (IAAG…FHLS), 237–252 (VLSS…AFVV), and 457–472 (SFAL…HGAR).

It belongs to the PsbB/PsbC family. PsbB subfamily. As to quaternary structure, PSII is composed of 1 copy each of membrane proteins PsbA, PsbB, PsbC, PsbD, PsbE, PsbF, PsbH, PsbI, PsbJ, PsbK, PsbL, PsbM, PsbT, PsbX, PsbY, PsbZ, Psb30/Ycf12, at least 3 peripheral proteins of the oxygen-evolving complex and a large number of cofactors. It forms dimeric complexes. Binds multiple chlorophylls. PSII binds additional chlorophylls, carotenoids and specific lipids. serves as cofactor.

The protein resides in the plastid. The protein localises to the chloroplast thylakoid membrane. One of the components of the core complex of photosystem II (PSII). It binds chlorophyll and helps catalyze the primary light-induced photochemical processes of PSII. PSII is a light-driven water:plastoquinone oxidoreductase, using light energy to abstract electrons from H(2)O, generating O(2) and a proton gradient subsequently used for ATP formation. The sequence is that of Photosystem II CP47 reaction center protein from Ceratophyllum demersum (Rigid hornwort).